Here is a 216-residue protein sequence, read N- to C-terminus: Uracil-DNA glycosylase (216 aa).

Residue D59 is the Proton acceptor of the active site.

Belongs to the uracil-DNA glycosylase (UDG) superfamily. UNG family.

It is found in the cytoplasm. The catalysed reaction is Hydrolyzes single-stranded DNA or mismatched double-stranded DNA and polynucleotides, releasing free uracil.. Excises uracil residues from the DNA which can arise as a result of misincorporation of dUMP residues by DNA polymerase or due to deamination of cytosine. In Idiomarina loihiensis (strain ATCC BAA-735 / DSM 15497 / L2-TR), this protein is Uracil-DNA glycosylase.